A 119-amino-acid polypeptide reads, in one-letter code: NADH dehydrogenase [ubiquinone] 1 subunit C2 (119 aa).

A helical membrane pass occupies residues 56–75 (GLHRQLLYITAFFFAGYYLV).

It belongs to the complex I NDUFC2 subunit family. As to quaternary structure, complex I is composed of 45 different subunits. Interacts with TMEM242.

It is found in the mitochondrion inner membrane. Functionally, accessory subunit of the mitochondrial membrane respiratory chain NADH dehydrogenase (Complex I), that is believed not to be involved in catalysis but required for the complex assembly. Complex I functions in the transfer of electrons from NADH to the respiratory chain. The immediate electron acceptor for the enzyme is believed to be ubiquinone. The polypeptide is NADH dehydrogenase [ubiquinone] 1 subunit C2 (Gorilla gorilla gorilla (Western lowland gorilla)).